Here is a 306-residue protein sequence, read N- to C-terminus: Agmatinase (306 aa).

His-126, Asp-149, His-151, Asp-153, Asp-230, and Asp-232 together coordinate Mn(2+).

This sequence belongs to the arginase family. Agmatinase subfamily. Mn(2+) serves as cofactor.

The enzyme catalyses agmatine + H2O = urea + putrescine. It functions in the pathway amine and polyamine biosynthesis; putrescine biosynthesis via agmatine pathway; putrescine from agmatine: step 1/1. Catalyzes the formation of putrescine from agmatine. This chain is Agmatinase, found in Escherichia coli (strain K12 / DH10B).